Reading from the N-terminus, the 145-residue chain is Large ribosomal subunit protein uL15 (145 aa).

Positions 1-57 (MKLNDLSPAPGSRREKHRPGRGIGSGLGKTGGRGHKGQTSRSGGTIAPGFEGGQQPL) are disordered. Residues 21 to 31 (RGIGSGLGKTG) are compositionally biased toward gly residues.

The protein belongs to the universal ribosomal protein uL15 family. In terms of assembly, part of the 50S ribosomal subunit.

In terms of biological role, binds to the 23S rRNA. The protein is Large ribosomal subunit protein uL15 of Pseudomonas fluorescens (strain SBW25).